Consider the following 229-residue polypeptide: Auxin-responsive protein IAA17 (229 aa).

The EAR-like (transcriptional repression) motif lies at Leu14 to Leu18. Positions Ala110–Gly211 constitute a PB1 domain.

It belongs to the Aux/IAA family. Homodimers and heterodimers. Interacts with the auxin response factors ARF1 and IAA24. Interacts with IAA1. Interacts with TPL. Interacts (via PB1 domain) with ARF7 (via PB1 domain). Post-translationally, phosphorylated by phytochrome A in vitro.

Its subcellular location is the nucleus. Functionally, aux/IAA proteins are short-lived transcriptional factors that function as repressors of early auxin response genes at low auxin concentrations. Repression is thought to result from the interaction with auxin response factors (ARFs), proteins that bind to the auxin-responsive promoter element (AuxRE). Formation of heterodimers with ARF proteins may alter their ability to modulate early auxin response genes expression. The polypeptide is Auxin-responsive protein IAA17 (IAA17) (Arabidopsis thaliana (Mouse-ear cress)).